The sequence spans 262 residues: tRNA pseudouridine synthase A (262 aa).

The active-site Nucleophile is Asp56. Position 114 (Tyr114) interacts with substrate.

This sequence belongs to the tRNA pseudouridine synthase TruA family. Homodimer.

It carries out the reaction uridine(38/39/40) in tRNA = pseudouridine(38/39/40) in tRNA. Formation of pseudouridine at positions 38, 39 and 40 in the anticodon stem and loop of transfer RNAs. This chain is tRNA pseudouridine synthase A, found in Lactiplantibacillus plantarum (strain ATCC BAA-793 / NCIMB 8826 / WCFS1) (Lactobacillus plantarum).